A 154-amino-acid chain; its full sequence is Small heat shock protein C2 (154 aa).

Residues 43 to 154 (STEKNLIPRT…GKTRKIEVKG (112 aa)) form the sHSP domain.

Belongs to the small heat shock protein (HSP20) family.

This is Small heat shock protein C2 (hspC2) from Rickettsia felis (strain ATCC VR-1525 / URRWXCal2) (Rickettsia azadi).